Reading from the N-terminus, the 63-residue chain is Megourin-1 (63 aa).

In terms of assembly, monomer. Contains four disulfide bonds.

The protein localises to the secreted. In terms of biological role, has antimicrobial activity against Gram-positive bacteria and fungi. The chain is Megourin-1 from Megoura viciae (Vetch aphid).